Consider the following 387-residue polypeptide: Succinate--CoA ligase [ADP-forming] subunit beta (387 aa).

The ATP-grasp domain maps to 9–244 (KEVLRKFGVA…LNEEEPSEIE (236 aa)). ATP contacts are provided by residues Lys46, 53–55 (GRG), Glu99, Cys102, and Glu107. Mg(2+)-binding residues include Asn199 and Asp213. Residues Asn264 and 321–323 (GIM) each bind substrate.

The protein belongs to the succinate/malate CoA ligase beta subunit family. As to quaternary structure, heterotetramer of two alpha and two beta subunits. Mg(2+) is required as a cofactor.

The catalysed reaction is succinate + ATP + CoA = succinyl-CoA + ADP + phosphate. It catalyses the reaction GTP + succinate + CoA = succinyl-CoA + GDP + phosphate. It functions in the pathway carbohydrate metabolism; tricarboxylic acid cycle; succinate from succinyl-CoA (ligase route): step 1/1. Functionally, succinyl-CoA synthetase functions in the citric acid cycle (TCA), coupling the hydrolysis of succinyl-CoA to the synthesis of either ATP or GTP and thus represents the only step of substrate-level phosphorylation in the TCA. The beta subunit provides nucleotide specificity of the enzyme and binds the substrate succinate, while the binding sites for coenzyme A and phosphate are found in the alpha subunit. This chain is Succinate--CoA ligase [ADP-forming] subunit beta, found in Bdellovibrio bacteriovorus (strain ATCC 15356 / DSM 50701 / NCIMB 9529 / HD100).